A 198-amino-acid polypeptide reads, in one-letter code: Imidazole glycerol phosphate synthase subunit HisH (198 aa).

A Glutamine amidotransferase type-1 domain is found at 1–194 (MIAIIDYGLG…LKGGFQDDQT (194 aa)). Residue Cys-77 is the Nucleophile of the active site. Catalysis depends on residues His-169 and Glu-171.

As to quaternary structure, heterodimer of HisH and HisF.

It is found in the cytoplasm. The catalysed reaction is 5-[(5-phospho-1-deoxy-D-ribulos-1-ylimino)methylamino]-1-(5-phospho-beta-D-ribosyl)imidazole-4-carboxamide + L-glutamine = D-erythro-1-(imidazol-4-yl)glycerol 3-phosphate + 5-amino-1-(5-phospho-beta-D-ribosyl)imidazole-4-carboxamide + L-glutamate + H(+). The enzyme catalyses L-glutamine + H2O = L-glutamate + NH4(+). Its pathway is amino-acid biosynthesis; L-histidine biosynthesis; L-histidine from 5-phospho-alpha-D-ribose 1-diphosphate: step 5/9. In terms of biological role, IGPS catalyzes the conversion of PRFAR and glutamine to IGP, AICAR and glutamate. The HisH subunit catalyzes the hydrolysis of glutamine to glutamate and ammonia as part of the synthesis of IGP and AICAR. The resulting ammonia molecule is channeled to the active site of HisF. The sequence is that of Imidazole glycerol phosphate synthase subunit HisH from Staphylococcus saprophyticus subsp. saprophyticus (strain ATCC 15305 / DSM 20229 / NCIMB 8711 / NCTC 7292 / S-41).